The following is a 287-amino-acid chain: Orotidine 5'-phosphate decarboxylase (287 aa).

K95 serves as the catalytic Proton donor.

It belongs to the OMP decarboxylase family. Type 2 subfamily.

The enzyme catalyses orotidine 5'-phosphate + H(+) = UMP + CO2. The protein operates within pyrimidine metabolism; UMP biosynthesis via de novo pathway; UMP from orotate: step 2/2. The protein is Orotidine 5'-phosphate decarboxylase of Albidiferax ferrireducens (strain ATCC BAA-621 / DSM 15236 / T118) (Rhodoferax ferrireducens).